The sequence spans 100 residues: Large ribosomal subunit protein uL23 (100 aa).

This sequence belongs to the universal ribosomal protein uL23 family. In terms of assembly, part of the 50S ribosomal subunit. Contacts protein L29, and trigger factor when it is bound to the ribosome.

In terms of biological role, one of the early assembly proteins it binds 23S rRNA. One of the proteins that surrounds the polypeptide exit tunnel on the outside of the ribosome. Forms the main docking site for trigger factor binding to the ribosome. This is Large ribosomal subunit protein uL23 from Mycolicibacterium paratuberculosis (strain ATCC BAA-968 / K-10) (Mycobacterium paratuberculosis).